A 217-amino-acid chain; its full sequence is Adenylate kinase (217 aa).

10 to 15 (GAGKGT) serves as a coordination point for ATP. Positions 30 to 59 (STGDMLRAQVKAGTALGLEAKKHMDAGGLV) are NMP. AMP is bound by residues Thr31, Arg36, 57 to 59 (GLV), 85 to 88 (GFPR), and Gln92. The segment at 122–159 (GRRAHLASGRTYHVKFNPPKVEGIDDVTGEPLVQRDDD) is LID. Residues Arg123 and 132-133 (TY) contribute to the ATP site. The AMP site is built by Arg156 and Arg167. ATP is bound at residue Gly203.

It belongs to the adenylate kinase family. As to quaternary structure, monomer.

The protein localises to the cytoplasm. It catalyses the reaction AMP + ATP = 2 ADP. It functions in the pathway purine metabolism; AMP biosynthesis via salvage pathway; AMP from ADP: step 1/1. Its function is as follows. Catalyzes the reversible transfer of the terminal phosphate group between ATP and AMP. Plays an important role in cellular energy homeostasis and in adenine nucleotide metabolism. The protein is Adenylate kinase of Dechloromonas aromatica (strain RCB).